We begin with the raw amino-acid sequence, 161 residues long: MVVAVYPGTFDPMTRGHEDLVRRASNIFDELVVGVAHSPNKRPFFSLEERIGIAREVLGHYPNVRVEGFSGLLKDFVRKNNARVIVRGLRAVSDFEYEFQMAGMNRYLLPDVETMFLTPSDQYQFISGTFVREIAVLGGDVSKFVFPSVERWLQEKIGKAE.

Thr-9 serves as a coordination point for substrate. Residues Thr-9–Phe-10 and His-17 contribute to the ATP site. Residues Lys-41, Leu-73, and Arg-87 each contribute to the substrate site. ATP is bound by residues Gly-88–Arg-90, Glu-98, and Tyr-123–Thr-129.

Belongs to the bacterial CoaD family. In terms of assembly, homohexamer. Mg(2+) serves as cofactor.

Its subcellular location is the cytoplasm. The catalysed reaction is (R)-4'-phosphopantetheine + ATP + H(+) = 3'-dephospho-CoA + diphosphate. It functions in the pathway cofactor biosynthesis; coenzyme A biosynthesis; CoA from (R)-pantothenate: step 4/5. Functionally, reversibly transfers an adenylyl group from ATP to 4'-phosphopantetheine, yielding dephospho-CoA (dPCoA) and pyrophosphate. The protein is Phosphopantetheine adenylyltransferase of Cupriavidus metallidurans (strain ATCC 43123 / DSM 2839 / NBRC 102507 / CH34) (Ralstonia metallidurans).